Reading from the N-terminus, the 347-residue chain is 4-hydroxy-2-oxovalerate aldolase 1 (347 aa).

The Pyruvate carboxyltransferase domain occupies 11–263 (VVLHDMCLRD…ETGVDLFKLM (253 aa)). Substrate is bound at residue 19–20 (RD). Asp20 provides a ligand contact to Mn(2+). His23 (proton acceptor) is an active-site residue. Substrate is bound by residues Ser173 and His202. Positions 202 and 204 each coordinate Mn(2+). Tyr293 serves as a coordination point for substrate.

The protein belongs to the 4-hydroxy-2-oxovalerate aldolase family.

It carries out the reaction (S)-4-hydroxy-2-oxopentanoate = acetaldehyde + pyruvate. This is 4-hydroxy-2-oxovalerate aldolase 1 (lapG) from Azoarcus sp. (strain BH72).